A 157-amino-acid chain; its full sequence is NudC domain-containing protein 2 (157 aa).

N-acetylserine is present on Ser-2. Residues 14–104 enclose the CS domain; sequence CGTPWGQWYQ…DAANCWTSLL (91 aa). The tract at residues 134 to 157 is disordered; sequence FDFSGAEISGNYTKGGPDFSNLEK. Ser-142 is subject to Phosphoserine. A Phosphotyrosine modification is found at Tyr-145.

In terms of assembly, interacts with LIS1.

The protein localises to the chromosome. Its subcellular location is the centromere. It is found in the kinetochore. It localises to the cytoplasm. The protein resides in the cytoskeleton. The protein localises to the microtubule organizing center. Its subcellular location is the centrosome. It is found in the spindle pole. Functionally, may regulate the LIS1/dynein pathway by stabilizing LIS1 with Hsp90 chaperone. This Homo sapiens (Human) protein is NudC domain-containing protein 2 (NUDCD2).